Consider the following 334-residue polypeptide: N-acetyl-gamma-glutamyl-phosphate reductase (334 aa).

Cys154 is an active-site residue.

It belongs to the NAGSA dehydrogenase family. Type 1 subfamily.

It is found in the cytoplasm. The catalysed reaction is N-acetyl-L-glutamate 5-semialdehyde + phosphate + NADP(+) = N-acetyl-L-glutamyl 5-phosphate + NADPH + H(+). Its pathway is amino-acid biosynthesis; L-arginine biosynthesis; N(2)-acetyl-L-ornithine from L-glutamate: step 3/4. Catalyzes the NADPH-dependent reduction of N-acetyl-5-glutamyl phosphate to yield N-acetyl-L-glutamate 5-semialdehyde. The chain is N-acetyl-gamma-glutamyl-phosphate reductase from Escherichia coli (strain K12).